We begin with the raw amino-acid sequence, 662 residues long: Transcription activator of gluconeogenesis NECHADRAFT_59099 (662 aa).

Positions 1-61 (MPHEMEENGA…KDPLRPRRKK (61 aa)) are disordered. 2 stretches are compositionally biased toward basic and acidic residues: residues 25-34 (TFLKDDEKMT) and 43-56 (TEVKKKYDPKDPLR). Positions 66–94 (CFACQRAHLTCGDERPCQRCIKRGLADAC) form a DNA-binding region, zn(2)-C6 fungal-type. 3 disordered regions span residues 105–149 (LHDA…TGSN), 502–524 (YSGRSTNGTNTPDHNSQGEMTTP), and 580–606 (YRAPQDPDQKEPGSQKDAQPGILSSRV). Composition is skewed to polar residues over residues 121-130 (YNPTPTPSRT) and 137-149 (SSQSDNLSATGSN). A PAS domain is found at 448-519 (TLVEYDDFLQ…TNTPDHNSQG (72 aa)). The span at 582–593 (APQDPDQKEPGS) shows a compositional bias: basic and acidic residues.

The protein belongs to the ERT1/acuK family.

The protein localises to the nucleus. Its function is as follows. Transcription factor which regulates nonfermentable carbon utilization. Activator of gluconeogenetic genes. The chain is Transcription activator of gluconeogenesis NECHADRAFT_59099 from Fusarium vanettenii (strain ATCC MYA-4622 / CBS 123669 / FGSC 9596 / NRRL 45880 / 77-13-4) (Fusarium solani subsp. pisi).